Here is a 186-residue protein sequence, read N- to C-terminus: Probable GPI-anchored cupredoxin ARB_05732-1 (186 aa).

A signal peptide spans 1-18 (MVNMNILTTVALAGLAAA). Residue histidine 55 coordinates Cu cation. A disulfide bridge links cysteine 66 with cysteine 104. A glycan (N-linked (GlcNAc...) asparagine) is linked at asparagine 87. Cu cation-binding residues include cysteine 98 and histidine 103. A disordered region spans residues 130–160 (GAGNGQAPSRVNNGSSGSGTPTSGGAPAATS). Residue asparagine 142 is glycosylated (N-linked (GlcNAc...) asparagine). The segment covering 143–160 (GSSGSGTPTSGGAPAATS) has biased composition (low complexity). Glycine 153 is lipidated: GPI-anchor amidated glycine. Positions 154–186 (GAPAATSPNAASSLTFSGAAALVAMGGAWIGLL) are cleaved as a propeptide — removed in mature form.

Belongs to the multicopper oxidase family. Requires Cu cation as cofactor.

The protein localises to the cell membrane. It is found in the secreted. In terms of biological role, probable electron transfer copper protein that serves as a direct electron donor. This chain is Probable GPI-anchored cupredoxin ARB_05732-1, found in Arthroderma benhamiae (strain ATCC MYA-4681 / CBS 112371) (Trichophyton mentagrophytes).